Consider the following 235-residue polypeptide: Phosphoribosylaminoimidazole-succinocarboxamide synthase (235 aa).

This sequence belongs to the SAICAR synthetase family.

The catalysed reaction is 5-amino-1-(5-phospho-D-ribosyl)imidazole-4-carboxylate + L-aspartate + ATP = (2S)-2-[5-amino-1-(5-phospho-beta-D-ribosyl)imidazole-4-carboxamido]succinate + ADP + phosphate + 2 H(+). It functions in the pathway purine metabolism; IMP biosynthesis via de novo pathway; 5-amino-1-(5-phospho-D-ribosyl)imidazole-4-carboxamide from 5-amino-1-(5-phospho-D-ribosyl)imidazole-4-carboxylate: step 1/2. The polypeptide is Phosphoribosylaminoimidazole-succinocarboxamide synthase (Clostridium botulinum (strain Eklund 17B / Type B)).